Consider the following 109-residue polypeptide: MRVSANLKSVRLSAQKCRLVADLVRGKSVDQALNILAFSPKKGAVIIKKVLESAIANAEHNEGADIDTLRVTSIFVDKGASLKRFTARAKGRGNRIEKQTCHISLTVGN.

The protein belongs to the universal ribosomal protein uL22 family. Part of the 50S ribosomal subunit.

Functionally, this protein binds specifically to 23S rRNA; its binding is stimulated by other ribosomal proteins, e.g. L4, L17, and L20. It is important during the early stages of 50S assembly. It makes multiple contacts with different domains of the 23S rRNA in the assembled 50S subunit and ribosome. The globular domain of the protein is located near the polypeptide exit tunnel on the outside of the subunit, while an extended beta-hairpin is found that lines the wall of the exit tunnel in the center of the 70S ribosome. This is Large ribosomal subunit protein uL22 from Chromobacterium violaceum (strain ATCC 12472 / DSM 30191 / JCM 1249 / CCUG 213 / NBRC 12614 / NCIMB 9131 / NCTC 9757 / MK).